The primary structure comprises 142 residues: Succinate dehydrogenase subunit 6, mitochondrial (142 aa).

N-acetylglycine is present on G2.

As to quaternary structure, component of complex II composed of eight subunits in plants: four classical SDH subunits SDH1, SDH2, SDH3 and SDH4 (a flavoprotein (FP), an iron-sulfur protein (IP), and a cytochrome b composed of a large and a small subunit.), as well as four subunits unknown in mitochondria from bacteria and heterotrophic eukaryotes.

The protein localises to the mitochondrion inner membrane. The protein operates within carbohydrate metabolism; tricarboxylic acid cycle. The protein is Succinate dehydrogenase subunit 6, mitochondrial of Arabidopsis thaliana (Mouse-ear cress).